We begin with the raw amino-acid sequence, 355 residues long: GPN-loop GTPase 1 (355 aa).

Positions 1-30 are disordered; it reads MAEKAENLPSSSAEASEEPSPQTGPNVNQK. A compositionally biased stretch (low complexity) spans 9 to 21; that stretch reads PSSSAEASEEPSP. 40-45 is a binding site for GTP; it reads GSGKTT. A Gly-Pro-Asn (GPN)-loop; involved in dimer interface motif is present at residues 97–99; that stretch reads GPN. 200 to 203 provides a ligand contact to GTP; sequence NKAD. The stretch at 286 to 311 forms a coiled coil; it reads EKVLAEKKLLDEEERKKRDEETLKGK.

This sequence belongs to the GPN-loop GTPase family. In terms of assembly, heterodimer with GPN3. Binds to RNA polymerase II (RNAPII).

The protein resides in the cytoplasm. It is found in the nucleus. Small GTPase required for proper nuclear import of RNA polymerase II (RNAPII). May act at an RNAP assembly step prior to nuclear import. The chain is GPN-loop GTPase 1 from Caenorhabditis elegans.